The chain runs to 396 residues: Deoxyuridine 5'-triphosphate nucleotidohydrolase (396 aa).

Residues 280–282 (RSS) and 380–381 (FG) contribute to the substrate site.

It belongs to the dUTPase family. Mg(2+) is required as a cofactor.

The catalysed reaction is dUTP + H2O = dUMP + diphosphate + H(+). Involved in nucleotide metabolism: produces dUMP, the immediate precursor of thymidine nucleotides and decreases the intracellular concentration of dUTP to avoid uracil incorporation into viral DNA. This chain is Deoxyuridine 5'-triphosphate nucleotidohydrolase, found in Homo sapiens (Human).